The sequence spans 368 residues: Cyclic AMP-responsive element-binding protein 3 (368 aa).

The transcription activation (acidic) stretch occupies residues 1–95 (MSHMELALDP…LSQEHVSIDL (95 aa)). The Cytoplasmic portion of the chain corresponds to 1 to 229 (MSHMELALDP…VIQTANKASS (229 aa)). 2 consecutive short sequence motifs (LXXLL motif) follow at residues 16 to 20 (LGFLL) and 57 to 61 (LSCLP). Residues 81-84 (DHTY) carry the HCFC1-binding-motif (HBM) motif. One can recognise a bZIP domain in the interval 153-216 (VLKRVRRKIR…LSLLDQLRRL (64 aa)). The basic motif stretch occupies residues 155 to 184 (KRVRRKIRNKKSAQESRRKKKVYVGGLESR). The tract at residues 186 to 193 (LKYTAQNL) is leucine-zipper. The helical; Signal-anchor for type II membrane protein transmembrane segment at 230–250 (SSTCVLVLLFSFCLLLVPAMY) threads the bilayer. The Lumenal segment spans residues 251-368 (SSDTRGSLPA…SVILQGRYSG (118 aa)). N344 is a glycosylation site (N-linked (GlcNAc...) asparagine).

It belongs to the bZIP family. ATF subfamily. Homodimer. Interacts with HCFC1; the interaction is required to stimulate CREB3 transcriptional activity. Interacts with CREBZF; the interaction occurs only in combination with HCFC1. Interacts (via central part and transmembrane region) with DCSTAMP (via C-terminus cytoplasmic domain). Interacts with OS9. Interacts (via leucine-zipper domain) with CREBRF (via leucine-zipper domain); the interaction occurs only after CREB3 activation and promotes CREB3 degradation. Interacts (via C-terminal domain) with CCR1. First proteolytically cleaved by site-1 protease (S1P) that generates membrane-associated N-terminus and a luminal C-terminus forms. The membrane-associated N-terminus form is further proteolytically processed probably by the site-2 protease (S2P) through a regulated intramembrane proteolysis (RIP), releasing the transcriptional active processed cyclic AMP-responsive element-binding protein 3 form, which is transported to the nucleus. The proteolytic cleavage is strongly induced during dendritic cell (DC) maturation and inhibited by DCSTAMP. That form is rapidly degraded. Post-translationally, N-glycosylated. Expressed in trigeminal ganglia (at protein level).

It localises to the endoplasmic reticulum membrane. The protein localises to the golgi apparatus. Its subcellular location is the nucleus. It is found in the cytoplasm. Its function is as follows. Endoplasmic reticulum (ER)-bound sequence-specific transcription factor that directly binds DNA and activates transcription. Plays a role in the unfolded protein response (UPR), promoting cell survival versus ER stress-induced apoptotic cell death. Also involved in cell proliferation, migration and differentiation, tumor suppression and inflammatory gene expression. Acts as a positive regulator of LKN-1/CCL15-induced chemotaxis signaling of leukocyte cell migration. Associates with chromatin to the HERPUD1 promoter. Also induces transcriptional activation of chemokine receptors. Functions as a negative transcriptional regulator in ligand-induced transcriptional activation of the glucocorticoid receptor NR3C1 by recruiting and activating histone deacetylases (HDAC1, HDAC2 and HDAC6). Also decreases the acetylation level of histone H4. Does not promote the chemotactic activity of leukocyte cells. This is the transcriptionally active form that translocates to the nucleus and activates unfolded protein response (UPR) target genes during endoplasmic reticulum (ER) stress response. Binds the cAMP response element (CRE) (consensus: 5'-GTGACGT[AG][AG]-3') and C/EBP sequences present in many promoters to activate transcription of the genes. Binds to the unfolded protein response element (UPRE) consensus sequences sites. Binds DNA to the 5'-CCAC[GA]-3'half of ERSE II (5'-ATTGG-N-CCACG-3'). The chain is Cyclic AMP-responsive element-binding protein 3 (CREB3) from Bos taurus (Bovine).